The sequence spans 7968 residues: Obscurin (7968 aa).

Ig-like domains follow at residues 10–100 (PRFL…LQVD), 110–202 (PHFL…LVVD), 236–322 (PASP…QTYS), 331–414 (PAVP…RTVA), and 420–508 (GNLL…VSAP). C31 and C82 form a disulfide bridge. Residues 228–249 (EAMRAEGAPASPPSTGTRTCTV) form a disordered region. Polar residues predominate over residues 240–249 (PSTGTRTCTV). Intrachain disulfides connect C259–C311 and C354–C404. Position 395 is a phosphoserine (S395). The Fibronectin type-III 1 domain maps to 515 to 612 (PPVDPVVKAR…FPGTVHLAPK (98 aa)). 12 consecutive Ig-like domains span residues 619–698 (LKAV…MEVR), 701–790 (PGLT…YQLS), 798–884 (LHKD…LRVS), 886–977 (PKVV…DVKE), 978–1066 (PKVV…FRLH), 1070–1161 (PKMM…HITE), 1162–1252 (PKGV…LHIT), 1254–1345 (PKAV…DVSE), 1346–1432 (PKAV…LSFS), 1438–1524 (PKVV…LSFH), 1530–1621 (PKAV…HVAE), and 1622–1719 (PKVV…PQIS). Disulfide bonds link C819–C870, C912–C962, C1004–C1054, C1096–C1146, C1188–C1238, C1280–C1330, C1372–C1422, C1464–C1514, C1556–C1606, C1648–C1698, C1723–C1791, and C1830–C1880. The Fibronectin type-III 2 domain occupies 1731–1808 (KEHEDIILTA…DFPVQVEEVA (78 aa)). 29 consecutive Ig-like domains span residues 1809–1894 (AKFC…LTVS), 1896–1982 (PRVV…AALR), 1987–2071 (PVLF…AKLT), 2077–2162 (VRLV…LVVT), 2165–2249 (PVSF…ASVK), 2289–2380 (PVTL…QSIT), 2468–2559 (PVVL…REVT), 2564–2643 (LQDA…LEVR), 2646–2730 (PVVF…ARVR), 2736–2823 (VGIT…LIVR), 2826–2908 (PAAI…STAS), 2920–2999 (EELT…AQLL), 3003–3092 (RRVH…LRVT), 3095–3183 (PSVF…VHAR), 3184–3268 (PVRF…ATLT), 3273–3356 (PAQF…ASLT), 3359–3444 (PMPA…ATLT), 3449–3532 (PAKF…ATLT), 3537–3620 (PARF…AMLT), 3625–3708 (PIKF…AMLT), 3713–3796 (PSKF…ATLT), 3801–3884 (PARF…ATLT), 3890–3973 (PVFR…ATLT), 3978–4062 (PVRF…ASLS), 4068–4160 (PKFK…PEVT), 4171–4239 (TADE…NHAS), 4248–4337 (PEVT…LKVT), 4340–4427 (NTVV…FLTV), and 4430–4518 (WRLE…ARLT). 3 disulfides stabilise this stretch: C2187/C2237, C2311/C2361, and C2490/C2540. Cysteines 2668 and 2718 form a disulfide. 2 disulfide bridges follow: C2848/C2898 and C2937/C2987. S2889 carries the phosphoserine modification. Intrachain disulfides connect C3117–C3167, C3206–C3256, C3295–C3344, C3383–C3432, C3471–C3520, C3559–C3608, C3647–C3696, C3735–C3784, C3823–C3872, C3911–C3961, C4000–C4050, and C4089–C4141. S4015 carries the post-translational modification Phosphoserine. Residues C4453 and C4508 are joined by a disulfide bond. Residues 4525–4619 (PPEDAEVVAR…LPQTVRLAEP (95 aa)) enclose the Fibronectin type-III 3 domain. In terms of domain architecture, Ig-like 47 spans 4624-4714 (PPQPSAPESR…AAATFQVALS (91 aa)). A disordered region spans residues 4749–4785 (MSREPTLDSISELPEEDGRSQRLPQEAEEVAPDLSEG). At S4750 the chain carries Phosphoserine. T4754 is modified (phosphothreonine). At S4757 the chain carries Phosphoserine. T4788 carries the phosphothreonine modification. The residue at position 4805 (S4805) is a Phosphoserine. The segment at 4820–4860 (LKKAGRPGTSPLASKVGAPAAPSVKPQQQQEPLAAVRPPLG) is disordered. The IQ domain occupies 4872–4901 (MDKAAVKIQAAFKGYKVRKEMKQQEGPMFS). 2 Ig-like domains span residues 4898–4989 (PMFS…VVVS) and 5126–5215 (PVFL…AELR). 2 disulfide bridges follow: C4919–C4971 and C5147–C5199. Residues 5238–5256 (AQGYLSSREQEGTESTTDE) are compositionally biased toward polar residues. A disordered region spans residues 5238–5257 (AQGYLSSREQEGTESTTDEG). Ig-like domains are found at residues 5260–5349 (PQVV…ARLL) and 5371–5467 (PRML…LHVS). Residues 5554 to 5596 (AKLQVPGGDSDEDSKTPSASPRHGRSRPSSSIQESSSESEDGD) form a disordered region. S5563 is modified (phosphoserine). A Phosphothreonine modification is found at T5569. Over residues 5570–5589 (PSASPRHGRSRPSSSIQESS) the composition is skewed to low complexity. Residues S5571 and S5573 each carry the phosphoserine modification. One can recognise an SH3 domain in the interval 5600–5667 (EIFDIYVVTA…SPAYLDRRLK (68 aa)). The DH domain occupies 5693–5877 (RLSSVIQELL…SALPQRAENK (185 aa)). The 110-residue stretch at 5895-6004 (EPIRQGHFIV…WVKEICGIQQ (110 aa)) folds into the PH domain. R5975 contacts a 1,2-diacyl-sn-glycero-3-phospho-(1D-myo-inositol-4,5-bisphosphate). An a 1,2-diacyl-sn-glycero-3-phospho-(1D-myo-inositol-3,4-bisphosphate)-binding site is contributed by R5980. 2 Ig-like domains span residues 6014–6097 (PDFE…GNCS) and 6108–6200 (PRFV…LRIQ). Intrachain disulfides connect C6035-C6087 and C6129-C6182. The segment at 6237–6296 (RLLGPKAPGPSTGDLTGPGPCPRGAPALQETGSQPPVTGTSEAPAVPPRVPQPLLHEGPE) is disordered. The span at 6266 to 6277 (ETGSQPPVTGTS) shows a compositional bias: polar residues. Residues 6357-6445 (PSMQVTIEDV…GQVLCKAELL (89 aa)) enclose the Ig-like 54 domain. Positions 6468-6721 (YEVKEEIGRG…AAQCLSHPWF (254 aa)) constitute a Protein kinase 1 domain. ATP-binding positions include 6474 to 6482 (IGRGVFGFV) and K6497. D6587 serves as the catalytic Proton acceptor. Disordered regions lie at residues 6777-6863 (GVAR…AQGC), 6952-7176 (SGTH…TMRK), and 7217-7272 (VSQS…TPWE). S6831 bears the Phosphoserine mark. Positions 7052 to 7061 (AVAPCPPGSF) are enriched in pro residues. Low complexity predominate over residues 7115–7139 (SSPGSASQASSSQVSSLRVGSSQVG). Residues 7160 to 7172 (DSTPTLQRPQEQA) show a composition bias toward polar residues. Residues 7227–7242 (EARAESQSEEQQEARA) show a composition bias toward basic and acidic residues. S7244 bears the Phosphoserine mark. Residues 7463–7552 (PTFLRELSDE…GTVTTTGVLR (90 aa)) enclose the Ig-like 55 domain. Residues C7484 and C7536 are joined by a disulfide bond. The 93-residue stretch at 7557–7649 (PSSSPCPDIG…PSEQVLLGGP (93 aa)) folds into the Fibronectin type-III 4 domain. A Protein kinase 2 domain is found at 7672 to 7924 (FAFQTQIQRG…ASSCLQCPWL (253 aa)). Residues 7678-7686 (IQRGRFSVV) and K7701 each bind ATP. Residue D7791 is the Proton acceptor of the active site.

The protein belongs to the protein kinase superfamily. CAMK Ser/Thr protein kinase family. In terms of assembly, interacts (via protein kinase domain 2) with CDH2 and (via protein kinase domain 1) with ATP1B1. Isoform 3 interacts with TTN/titin and calmodulin. Isoform 3 interacts with ANK1 isoform Mu17/ank1.5. Requires Mg(2+) as cofactor. Post-translationally, autophosphorylated by protein kinase domains 1 and 2.

The protein localises to the cytoplasm. Its subcellular location is the myofibril. It is found in the sarcomere. It localises to the m line. The protein resides in the z line. The protein localises to the cell membrane. Its subcellular location is the sarcolemma. It is found in the nucleus. It carries out the reaction L-seryl-[protein] + ATP = O-phospho-L-seryl-[protein] + ADP + H(+). The enzyme catalyses L-threonyl-[protein] + ATP = O-phospho-L-threonyl-[protein] + ADP + H(+). Structural component of striated muscles which plays a role in myofibrillogenesis. Probably involved in the assembly of myosin into sarcomeric A bands in striated muscle. Has serine/threonine protein kinase activity and phosphorylates N-cadherin CDH2 and sodium/potassium-transporting ATPase subunit ATP1B1. Binds (via the PH domain) strongly to phosphatidylinositol 3,4-bisphosphate (PtdIns(3,4)P2) and phosphatidylinositol 4,5-bisphosphate (PtdIns(4,5)P2), and to a lesser extent to phosphatidylinositol 3-phosphate (PtdIns(3)P), phosphatidylinositol 4-phosphate (PtdIns(4)P), phosphatidylinositol 5-phosphate (PtdIns(5)P) and phosphatidylinositol 3,4,5-trisphosphate (PtdIns(3,4,5)P3). The polypeptide is Obscurin (OBSCN) (Homo sapiens (Human)).